The sequence spans 503 residues: AMP phosphorylase (503 aa).

Residues G168, 194–199 (SRAITS), and T203 each bind AMP. D256 (proton donor) is an active-site residue. AMP-binding residues include S264 and K288.

Belongs to the thymidine/pyrimidine-nucleoside phosphorylase family. Type 2 subfamily.

The enzyme catalyses AMP + phosphate = alpha-D-ribose 1,5-bisphosphate + adenine. The catalysed reaction is CMP + phosphate = cytosine + alpha-D-ribose 1,5-bisphosphate. It catalyses the reaction UMP + phosphate = alpha-D-ribose 1,5-bisphosphate + uracil. In terms of biological role, catalyzes the conversion of AMP and phosphate to adenine and ribose 1,5-bisphosphate (R15P). Exhibits phosphorylase activity toward CMP and UMP in addition to AMP. Functions in an archaeal AMP degradation pathway, together with R15P isomerase and RubisCO. The protein is AMP phosphorylase of Pyrococcus horikoshii (strain ATCC 700860 / DSM 12428 / JCM 9974 / NBRC 100139 / OT-3).